We begin with the raw amino-acid sequence, 98 residues long: Protein Vpr (98 aa).

The interval 1–42 (MEQLPEDQGPQREPYNEWTLEILEELKREAVRHFPRDWLHQL) is homooligomerization. Phosphoserine; by host is present on residues serine 79 and serine 98.

It belongs to the HIV-1 VPR protein family. Homooligomer, may form homodimer. Interacts with p6-gag region of the Pr55 Gag precursor protein through a (Leu-X-X)4 motif near the C-terminus of the P6gag protein. Interacts with host UNG. May interact with host RAD23A/HHR23A. Interacts with host VPRBP/DCAF1, leading to hijack the CUL4A-RBX1-DDB1-DCAF1/VPRBP complex, mediating ubiquitination of host proteins such as TERT and ZGPAT and arrest of the cell cycle in G2 phase. In terms of processing, phosphorylated on several residues by host. These phosphorylations regulate VPR activity for the nuclear import of the HIV-1 pre-integration complex.

The protein localises to the virion. It is found in the host nucleus. Its subcellular location is the host extracellular space. In terms of biological role, during virus replication, may deplete host UNG protein, and incude G2-M cell cycle arrest. Acts by targeting specific host proteins for degradation by the 26S proteasome, through association with the cellular CUL4A-DDB1 E3 ligase complex by direct interaction with host VPRPB/DCAF-1. Cell cycle arrest reportedly occurs within hours of infection and is not blocked by antiviral agents, suggesting that it is initiated by the VPR carried into the virion. Additionally, VPR induces apoptosis in a cell cycle dependent manner suggesting that these two effects are mechanistically linked. Detected in the serum and cerebrospinal fluid of AIDS patient, VPR may also induce cell death to bystander cells. During virus entry, plays a role in the transport of the viral pre-integration (PIC) complex to the host nucleus. This function is crucial for viral infection of non-dividing macrophages. May act directly at the nuclear pore complex, by binding nucleoporins phenylalanine-glycine (FG)-repeat regions. The polypeptide is Protein Vpr (Pan troglodytes (Chimpanzee)).